Consider the following 291-residue polypeptide: Putative carboxymethylenebutenolidase (291 aa).

Positions methionine 1 to alanine 40 are cleaved as a signal peptide. Catalysis depends on residues cysteine 170, aspartate 227, and histidine 259.

It belongs to the dienelactone hydrolase family.

The enzyme catalyses 2-(5-oxo-2,5-dihydrofuran-2-ylidene)acetate + H2O = 4-oxohex-2-enedioate + H(+). The protein is Putative carboxymethylenebutenolidase of Methylorubrum extorquens (strain ATCC 14718 / DSM 1338 / JCM 2805 / NCIMB 9133 / AM1) (Methylobacterium extorquens).